A 498-amino-acid chain; its full sequence is Probable cytosol aminopeptidase (498 aa).

Residues Lys264 and Asp269 each coordinate Mn(2+). Lys276 is an active-site residue. Residues Asp287, Asp346, and Glu348 each coordinate Mn(2+). The active site involves Arg350.

This sequence belongs to the peptidase M17 family. Requires Mn(2+) as cofactor.

Its subcellular location is the cytoplasm. It carries out the reaction Release of an N-terminal amino acid, Xaa-|-Yaa-, in which Xaa is preferably Leu, but may be other amino acids including Pro although not Arg or Lys, and Yaa may be Pro. Amino acid amides and methyl esters are also readily hydrolyzed, but rates on arylamides are exceedingly low.. The enzyme catalyses Release of an N-terminal amino acid, preferentially leucine, but not glutamic or aspartic acids.. Presumably involved in the processing and regular turnover of intracellular proteins. Catalyzes the removal of unsubstituted N-terminal amino acids from various peptides. The polypeptide is Probable cytosol aminopeptidase (Rhizobium rhizogenes (strain K84 / ATCC BAA-868) (Agrobacterium radiobacter)).